Consider the following 306-residue polypeptide: tRNA pseudouridine synthase B (306 aa).

Residue D43 is the Nucleophile of the active site.

It belongs to the pseudouridine synthase TruB family. Type 1 subfamily.

The catalysed reaction is uridine(55) in tRNA = pseudouridine(55) in tRNA. Its function is as follows. Responsible for synthesis of pseudouridine from uracil-55 in the psi GC loop of transfer RNAs. This chain is tRNA pseudouridine synthase B, found in Lacticaseibacillus casei (strain BL23) (Lactobacillus casei).